Here is a 205-residue protein sequence, read N- to C-terminus: Small ribosomal subunit protein uS4 (205 aa).

The interval 1 to 49 (MSKRQSAKYKLDRRMGENIWGRPKSPVNRREYGPGQHGQRRKGKLSDFG) is disordered. Residues 94–157 (SRLDAIVFRA…KQLTVVLESV (64 aa)) form the S4 RNA-binding domain.

The protein belongs to the universal ribosomal protein uS4 family. Part of the 30S ribosomal subunit. Contacts protein S5. The interaction surface between S4 and S5 is involved in control of translational fidelity.

In terms of biological role, one of the primary rRNA binding proteins, it binds directly to 16S rRNA where it nucleates assembly of the body of the 30S subunit. Its function is as follows. With S5 and S12 plays an important role in translational accuracy. In Chelativorans sp. (strain BNC1), this protein is Small ribosomal subunit protein uS4.